The chain runs to 111 residues: Ig kappa chain V-III region MOPC 70 (111 aa).

The segment at 1–23 (DIVLTQSPASLAVSLGQRATISC) is framework-1. A disulfide bond links cysteine 23 and cysteine 92. Residues 24-38 (RASESVDNSGISFMN) are complementarity-determining-1. The framework-2 stretch occupies residues 39 to 53 (WFQQKPGQPPKLLIY). The tract at residues 54–60 (AASNQGS) is complementarity-determining-2. The interval 61–92 (GVPARFSGSGSGTDFSLNIHPMEEDDTAMYFC) is framework-3. The segment at 93 to 101 (QQSKEVPWT) is complementarity-determining-3. Residues 102-111 (FGGGTKLEIK) are framework-4.

The protein is Ig kappa chain V-III region MOPC 70 of Mus musculus (Mouse).